Here is a 535-residue protein sequence, read N- to C-terminus: Beta-amylase (535 aa).

Positions 1–2 (ME) are cleaved as a propeptide — removed in mature form. Valine 3 carries the N-acetylvaline modification. Substrate is bound by residues aspartate 51, histidine 91, and aspartate 99. The Proton donor role is filled by glutamate 184. Positions 293, 298, and 340 each coordinate substrate. The Proton acceptor role is filled by glutamate 378. Residues 379 to 380 (NA) and arginine 418 each bind substrate. 3 consecutive repeat copies span residues 489-499 (GPTGGMGGQAE), 500-510 (GPTCGMGGQVK), and 511-521 (GPTGGMGGQAE). Positions 489–532 (GPTGGMGGQAEGPTCGMGGQVKGPTGGMGGQAEDPTSGMGGELP) are 4 X 11 AA tandem repeats. Residues 490–535 (PTGGMGGQAEGPTCGMGGQVKGPTGGMGGQAEDPTSGMGGELPATM) constitute a propeptide, removed in mature form. Residues 513–535 (TGGMGGQAEDPTSGMGGELPATM) are disordered. A 4; approximate repeat occupies 522 to 532 (DPTSGMGGELP).

The protein belongs to the glycosyl hydrolase 14 family. In terms of assembly, monomer. In terms of tissue distribution, endosperm.

The catalysed reaction is Hydrolysis of (1-&gt;4)-alpha-D-glucosidic linkages in polysaccharides so as to remove successive maltose units from the non-reducing ends of the chains.. In terms of biological role, catalyzes the liberation of maltose from 1,4-alpha-D glucans. This Hordeum vulgare subsp. spontaneum (Wild barley) protein is Beta-amylase.